The chain runs to 536 residues: Prickle planar cell polarity protein 3-B (536 aa).

One can recognise a PET domain in the interval 66 to 175 (SGSQRDSLCD…CVRPISGTMS (110 aa)). 3 LIM zinc-binding domains span residues 177 to 241 (TVCQ…ELKR), 242 to 302 (PRCL…LYAQ), and 305 to 366 (DSCG…HTKS). A disordered region spans residues 418-536 (PTQAAPARSL…KKKDKSCFLS (119 aa)). Over residues 438 to 448 (FSRECPNRRSL) the composition is skewed to basic and acidic residues. The span at 450–467 (DLSSHTRTPTRVTFQLPS) shows a compositional bias: polar residues. Residues 474 to 487 (SISFSRPSFTSSSS) are compositionally biased toward low complexity.

This sequence belongs to the prickle / espinas / testin family. Interacts with vangl2 via its C-terminus. The vangl2-dependent membrane recruitment of prickle3 is a prerequisite for its polarization. Interacts with wtip. Wtip is involved in the recruitment of prickle3 to the basal body.

It localises to the cytoplasm. It is found in the cell membrane. The protein resides in the mitochondrion. Involved in the planar cell polarity (PCP) pathway that is essential for the polarization of epithelial cells during morphogenetic processes, including gastrulation and neurulation. PCP is maintained by two molecular modules, the global and the core modules. Proteins of the core module include the proteins Frizzled (Fz), Disheveled (Dsh), Van Gogh (Vang), Prickle (Pk), Flamingo (Fmi, Celsr) and Diego (Dgo). The core module proteins develop subcellular asymmetry, accumulating in two groups on opposite sides of epithelial cells. Distinct proximal (Vang, Pk and Fmi) and distal (Fz, Dsh, Dgo and Fmi) complexes segregate to opposite sides of the cell, where they interact with the opposite complex in the neighboring cell at or near the adherents junctions. Directional information to orient polarization with respect to the tissue axes is provided by the global module which involves Wnt proteins. Involved in the organization of the basal body. Involved in cilia growth and positioning. Required for proper assembly, stability, and function of mitochondrial membrane ATP synthase (mitochondrial complex V). In Xenopus laevis (African clawed frog), this protein is Prickle planar cell polarity protein 3-B (prickle3-b).